The sequence spans 260 residues: Carbonic anhydrase 2 (260 aa).

Serine 2 carries the post-translational modification N-acetylserine. A Phosphoserine modification is found at serine 2. Residues 3-259 form the Alpha-carbonic anhydrase domain; that stretch reads HHWGYSKHNG…LKNRKIKASF (257 aa). The active-site Proton acceptor is the histidine 64. Asparagine 67 is an active-site residue. Serine 87 is subject to Phosphoserine. Zn(2+) contacts are provided by histidine 94, histidine 96, and histidine 119. Tyrosine 127 is an active-site residue. Serine 165 is subject to Phosphoserine. Residue 198–199 participates in substrate binding; the sequence is TT.

The protein belongs to the alpha-carbonic anhydrase family. In terms of assembly, interacts with SLC4A4. Interaction with SLC4A7 regulates SLC4A7 transporter activity. Interacts with SLC26A6. The cofactor is Zn(2+).

The protein localises to the cytoplasm. It localises to the cell membrane. It catalyses the reaction hydrogencarbonate + H(+) = CO2 + H2O. The enzyme catalyses urea = cyanamide + H2O. Its activity is regulated as follows. Inhibited by acetazolamide. Catalyzes the reversible hydration of carbon dioxide. Can also hydrate cyanamide to urea. Involved in the regulation of fluid secretion into the anterior chamber of the eye. Essential for bone resorption and osteoclast differentiation. Contributes to intracellular pH regulation in the duodenal upper villous epithelium during proton-coupled peptide absorption. Stimulates the chloride-bicarbonate exchange activity of SLC26A6. In Mus musculus (Mouse), this protein is Carbonic anhydrase 2 (Ca2).